Reading from the N-terminus, the 517-residue chain is Serine hydroxymethyltransferase 2, mitochondrial (517 aa).

The transit peptide at 1–31 (MAMASALRRLSSSSNKPLQRLFNGGHLYSMS) directs the protein to the mitochondrion. Position 287 is an N6-(pyridoxal phosphate)lysine (K287).

Belongs to the SHMT family. Homotetramer. Pyridoxal 5'-phosphate serves as cofactor.

It localises to the mitochondrion. It catalyses the reaction (6R)-5,10-methylene-5,6,7,8-tetrahydrofolate + glycine + H2O = (6S)-5,6,7,8-tetrahydrofolate + L-serine. The protein operates within one-carbon metabolism; tetrahydrofolate interconversion. Catalyzes the interconversion of serine and glycine. The sequence is that of Serine hydroxymethyltransferase 2, mitochondrial from Flaveria pringlei.